Consider the following 400-residue polypeptide: Hyaluronan and proteoglycan link protein 4 (400 aa).

Residues Met1–Ala30 form the signal peptide. Residues Ser47–Gly155 form the Ig-like C2-type domain. Cystine bridges form between Cys69-Cys144, Cys186-Cys264, Cys210-Cys231, Cys291-Cys361, and Cys316-Cys337. An N-linked (GlcNAc...) asparagine glycan is attached at Asn133. Link domains are found at residues Val164–Thr266 and Gly271–Arg363.

It belongs to the HAPLN family. Expressed predominantly in brain where it is found mainly throughout the midbrain and hindbrain in a perineuronal net pattern.

Its subcellular location is the secreted. The protein localises to the extracellular space. It is found in the extracellular matrix. In terms of biological role, essential for the proper localization of brevican (BCAN), mainly as a perineuronal nets (PNNs)-type deposition in the brainstem and cerebellum thereby playing a key role in the formation and structural organization of PNNs. Contributes to the formation and transmission of inhibitory GABAergic synapses between Purkinje cells and deep cerebellar nuclei neurons. This is Hyaluronan and proteoglycan link protein 4 (Hapln4) from Mus musculus (Mouse).